Reading from the N-terminus, the 678-residue chain is NADPH--cytochrome P450 reductase (678 aa).

The residue at position 2 (Gly2) is an N-acetylglycine. The Lumenal portion of the chain corresponds to 2 to 22 (GDSHEDTSATMPEAVAEEVSL). The helical transmembrane segment at 23 to 43 (FSTTDMVLFSLIVGVLTYWFI) threads the bilayer. At 44 to 678 (FRKKKEEIPE…KGRYSLDVWS (635 aa)) the chain is on the cytoplasmic side. In terms of domain architecture, Flavodoxin-like spans 80–224 (IIVFYGSQTG…DFITWREQFW (145 aa)). Residues 86–91 (SQTGTA), 138–141 (ATYG), 173–182 (LGNKTYEHFN), and Asp208 each bind FMN. The FAD-binding FR-type domain occupies 279–521 (KNPFLAAVTA…FVRKSQFRLP (243 aa)). Arg298 is a binding site for NADP(+). Residues Arg424, 454–457 (RYYS), 472–474 (CAV), Tyr478, and 488–491 (GVAT) contribute to the FAD site. NADP(+)-binding positions include Thr535, 596 to 597 (SR), 602 to 606 (KVYVQ), and Asp639. Residue Trp677 coordinates FAD.

Belongs to the NADPH--cytochrome P450 reductase family. The protein in the N-terminal section; belongs to the flavodoxin family. This sequence in the C-terminal section; belongs to the flavoprotein pyridine nucleotide cytochrome reductase family. FAD is required as a cofactor. It depends on FMN as a cofactor.

It is found in the endoplasmic reticulum membrane. It catalyses the reaction 2 oxidized [cytochrome P450] + NADPH = 2 reduced [cytochrome P450] + NADP(+) + H(+). In terms of biological role, this enzyme is required for electron transfer from NADP to cytochrome P450 in microsomes. It can also provide electron transfer to heme oxygenase and cytochrome B5. This is NADPH--cytochrome P450 reductase from Rattus norvegicus (Rat).